Consider the following 428-residue polypeptide: Adenylosuccinate synthetase (428 aa).

GTP contacts are provided by residues 12 to 18 (GDEGKGK) and 40 to 42 (GHT). The active-site Proton acceptor is the aspartate 13. Positions 13 and 40 each coordinate Mg(2+). Residues 13-16 (DEGK), 38-41 (NAGH), threonine 128, arginine 142, glutamine 222, threonine 237, and arginine 301 each bind IMP. The active-site Proton donor is histidine 41. Residue 297–303 (VNTGRAR) participates in substrate binding. Residues arginine 303, 329-331 (KLD), and 411-413 (STS) each bind GTP.

The protein belongs to the adenylosuccinate synthetase family. As to quaternary structure, homodimer. Mg(2+) serves as cofactor.

It localises to the cytoplasm. It carries out the reaction IMP + L-aspartate + GTP = N(6)-(1,2-dicarboxyethyl)-AMP + GDP + phosphate + 2 H(+). Its pathway is purine metabolism; AMP biosynthesis via de novo pathway; AMP from IMP: step 1/2. Its function is as follows. Plays an important role in the de novo pathway of purine nucleotide biosynthesis. Catalyzes the first committed step in the biosynthesis of AMP from IMP. The polypeptide is Adenylosuccinate synthetase (Caulobacter vibrioides (strain ATCC 19089 / CIP 103742 / CB 15) (Caulobacter crescentus)).